The chain runs to 263 residues: Type III pantothenate kinase (263 aa).

Residue 14–21 (DIGNTSVN) coordinates ATP. 115 to 118 (GADR) serves as a coordination point for substrate. Catalysis depends on D117, which acts as the Proton acceptor. D137 provides a ligand contact to K(+). An ATP-binding site is contributed by T140. Residue T192 coordinates substrate.

It belongs to the type III pantothenate kinase family. In terms of assembly, homodimer. Requires NH4(+) as cofactor. K(+) is required as a cofactor.

The protein resides in the cytoplasm. The catalysed reaction is (R)-pantothenate + ATP = (R)-4'-phosphopantothenate + ADP + H(+). The protein operates within cofactor biosynthesis; coenzyme A biosynthesis; CoA from (R)-pantothenate: step 1/5. Functionally, catalyzes the phosphorylation of pantothenate (Pan), the first step in CoA biosynthesis. The protein is Type III pantothenate kinase of Dehalococcoides mccartyi (strain CBDB1).